We begin with the raw amino-acid sequence, 49 residues long: Metallothionein (49 aa).

A beta region spans residues Ser-1–Cys-16. A divalent metal cation contacts are provided by Cys-2, Cys-6, Cys-8, Cys-11, Cys-13, Cys-16, Cys-20, Cys-21, Cys-23, Cys-24, Cys-28, Cys-31, Cys-35, Cys-37, Cys-45, Cys-47, and Cys-48. An alpha region spans residues Arg-17–His-49.

Belongs to the metallothionein superfamily. Type 1 family.

Functionally, metallothioneins have a high content of cysteine residues that bind various heavy metals. This Phasianus colchicus colchicus (Black-necked pheasant) protein is Metallothionein.